A 309-amino-acid chain; its full sequence is Olfactory receptor 4B1 (309 aa).

The Extracellular portion of the chain corresponds to 1–23 (MASTSNVTELIFTGLFQDPAVQS). Residue Asn6 is glycosylated (N-linked (GlcNAc...) asparagine). The helical transmembrane segment at 24–47 (VCFVVFLPVYLATVVGNGLIVLTV) threads the bilayer. At 48 to 55 (SISKSLDS) the chain is on the cytoplasmic side. The chain crosses the membrane as a helical span at residues 56–77 (PMYFFLSCLSLVEISYSSTIAP). Topologically, residues 78 to 98 (KFIIDLLAKIKTISLEGCLTQ) are extracellular. Residues Cys95 and Cys187 are joined by a disulfide bond. The chain crosses the membrane as a helical span at residues 99–118 (IFFFHFFGVAEILLIVVMAY). Topologically, residues 119 to 137 (DCYVAICKPLHYMNIISRQ) are cytoplasmic. The helical transmembrane segment at 138–156 (LCHLLVAGSWLGGFCHSII) threads the bilayer. The Extracellular portion of the chain corresponds to 157 to 193 (QILVIIQLPFCGPNVIDHYFCDLQPLFKLACTDTFME). The helical transmembrane segment at 194 to 217 (GVIVLANSGLFSVFSFLILVSSYI) threads the bilayer. The Cytoplasmic portion of the chain corresponds to 218 to 233 (VILVNLRNHSAEGRHK). Residues 234–256 (ALSTCASHITVVILFFGPAIFLY) form a helical membrane-spanning segment. At 257–267 (MRPSSTFTEDK) the chain is on the extracellular side. A helical transmembrane segment spans residues 268 to 287 (LVAVFYTVITPMLNPIIYTL). Residues 288–309 (RNAEVKIAIRRLWSKKENPGRE) lie on the Cytoplasmic side of the membrane.

It belongs to the G-protein coupled receptor 1 family.

The protein resides in the cell membrane. Odorant receptor. The chain is Olfactory receptor 4B1 (OR4B1) from Homo sapiens (Human).